The chain runs to 169 residues: Anaerobic nitrite reductase NSHB3 (169 aa).

Residues arginine 15–lysine 165 form the Globin domain. The short motif at glutamate 48–serine 52 is the Homodimerization element. Residues serine 58, lysine 72, histidine 76, arginine 106, threonine 110, and histidine 111 each contribute to the heme b site. The Homodimerization motif lies at aspartate 118–glutamate 130.

It belongs to the plant globin family. In terms of assembly, homodimer. The cofactor is heme b.

The protein localises to the cytoplasm. The protein resides in the nucleus. It carries out the reaction Fe(III)-heme b-[protein] + nitric oxide + H2O = Fe(II)-heme b-[protein] + nitrite + 2 H(+). Its function is as follows. Phytoglobin that reduces nitrite to nitric oxide under anoxic conditions (e.g. during flooding or in waterlogged soil). May not function as an oxygen storage or transport protein. Has an unusually high affinity for O(2) through an hexacoordinate heme iron because of a very low dissociation constant. The sequence is that of Anaerobic nitrite reductase NSHB3 from Oryza sativa subsp. indica (Rice).